Consider the following 151-residue polypeptide: MERPEHELIRQSWRAVSRSPLEHGTVLFARLFDLEPDLLPLFQYNCRQFSSPEDCLSSPEFLDHIRKVMLVIDAAVTNVEDLSSLEEYLAGLGRKHRAVGVKLSSFSAVGESLLYMLEKCLGPTFTPATRAAWSQLYGAVVQAMSRGWNGE.

Residues 1–149 (MERPEHELIR…VVQAMSRGWN (149 aa)) enclose the Globin domain. Heme b is bound by residues histidine 64 and histidine 96.

It belongs to the globin family. As to quaternary structure, monomer. Homodimer and homotetramer; disulfide-linked. Mainly monomeric but also detected as part of homodimers and homotetramers. Interacts with 14-3-3 proteins; regulates the phosphorylation of NGB. Could interact (ferrous form) with G-alpha(i) proteins (GTP-bound form). Post-translationally, phosphorylated during hypoxia by ERK1/ERK2. Phosphorylation regulates the heme pocket hexacoordination preventing the association of His-64 with the heme metal center. Thereby, promotes the access of dioxygen and nitrite to the heme and stimulates the nitrite reductase activity. Phosphorylation during hypoxia is stabilized by 14-3-3 proteins.

It is found in the cytoplasm. The protein localises to the cytosol. The protein resides in the mitochondrion matrix. It catalyses the reaction Fe(III)-heme b-[protein] + nitric oxide + H2O = Fe(II)-heme b-[protein] + nitrite + 2 H(+). Its function is as follows. Monomeric globin with a bis-histidyl six-coordinate heme-iron atom through which it can bind dioxygen, carbon monoxide and nitric oxide. Could help transport oxygen and increase its availability to the metabolically active neuronal tissues, though its low quantity in tissues as well as its high affinity for dioxygen, which may limit its oxygen-releasing ability, argue against it. The ferrous/deoxygenated form exhibits a nitrite reductase activity and it could produce nitric oxide which in turn inhibits cellular respiration in response to hypoxia. In its ferrous/deoxygenated state, it may also exhibit GDI (Guanine nucleotide Dissociation Inhibitor) activity toward heterotrimeric G-alpha proteins, thereby regulating signal transduction to facilitate neuroprotective responses in the wake of hypoxia and associated oxidative stress. This chain is Neuroglobin, found in Sus scrofa (Pig).